A 188-amino-acid polypeptide reads, in one-letter code: MRVIASSIRKGNVIEQDGKLYVVLTAENIHPGKGTPVSQIEMRRISDGVKISERYKTTDQVERATIEDHNFTFLYEDGDGFHFMNAETYDQVQVPKDIVGSAAPYLQENMVVKLSLHDMVPVAITLPQRVTLEVVETEPVTKGQTASSSYKPAVLSNGVRTGVPPHVAVGTRVVVMTEDGSYVERAKD.

The protein belongs to the elongation factor P family.

Its subcellular location is the cytoplasm. It participates in protein biosynthesis; polypeptide chain elongation. Involved in peptide bond synthesis. Stimulates efficient translation and peptide-bond synthesis on native or reconstituted 70S ribosomes in vitro. Probably functions indirectly by altering the affinity of the ribosome for aminoacyl-tRNA, thus increasing their reactivity as acceptors for peptidyl transferase. The chain is Elongation factor P from Nitrobacter winogradskyi (strain ATCC 25391 / DSM 10237 / CIP 104748 / NCIMB 11846 / Nb-255).